Reading from the N-terminus, the 202-residue chain is uncharacterized protein (202 aa).

It belongs to the NAD(P)H dehydrogenase (quinone) family.

This is an uncharacterized protein from Haemophilus influenzae (strain ATCC 51907 / DSM 11121 / KW20 / Rd).